We begin with the raw amino-acid sequence, 57 residues long: Large ribosomal subunit protein bL32B (57 aa).

It belongs to the bacterial ribosomal protein bL32 family.

This is Large ribosomal subunit protein bL32B from Listeria welshimeri serovar 6b (strain ATCC 35897 / DSM 20650 / CCUG 15529 / CIP 8149 / NCTC 11857 / SLCC 5334 / V8).